Here is a 364-residue protein sequence, read N- to C-terminus: Dihydroorotate dehydrogenase (quinone) (364 aa).

Residues 62 to 66 (AGFDK) and T86 contribute to the FMN site. K66 lines the substrate pocket. Residue 111-115 (NRMGF) coordinates substrate. Residues N142 and N175 each contribute to the FMN site. N175 serves as a coordination point for substrate. Catalysis depends on S178, which acts as the Nucleophile. N180 lines the substrate pocket. FMN contacts are provided by K216 and T244. 245–246 (NT) provides a ligand contact to substrate. FMN-binding positions include G267, G296, and 317–318 (YT).

The protein belongs to the dihydroorotate dehydrogenase family. Type 2 subfamily. As to quaternary structure, monomer. FMN serves as cofactor.

It is found in the cell membrane. It carries out the reaction (S)-dihydroorotate + a quinone = orotate + a quinol. It participates in pyrimidine metabolism; UMP biosynthesis via de novo pathway; orotate from (S)-dihydroorotate (quinone route): step 1/1. Functionally, catalyzes the conversion of dihydroorotate to orotate with quinone as electron acceptor. The protein is Dihydroorotate dehydrogenase (quinone) of Anaeromyxobacter dehalogenans (strain 2CP-C).